A 178-amino-acid polypeptide reads, in one-letter code: Large ribosomal subunit protein bL25 (178 aa).

It belongs to the bacterial ribosomal protein bL25 family. CTC subfamily. In terms of assembly, part of the 50S ribosomal subunit; part of the 5S rRNA/L5/L18/L25 subcomplex. Contacts the 5S rRNA. Binds to the 5S rRNA independently of L5 and L18.

Its function is as follows. This is one of the proteins that binds to the 5S RNA in the ribosome where it forms part of the central protuberance. The sequence is that of Large ribosomal subunit protein bL25 from Helicobacter pylori (strain G27).